The primary structure comprises 309 residues: tRNA dimethylallyltransferase (309 aa).

8–15 (GPTATGKS) serves as a coordination point for ATP. Position 10–15 (10–15 (TATGKS)) interacts with substrate. Residues 33 to 36 (DSRQ) are interaction with substrate tRNA.

This sequence belongs to the IPP transferase family. As to quaternary structure, monomer. Mg(2+) serves as cofactor.

The enzyme catalyses adenosine(37) in tRNA + dimethylallyl diphosphate = N(6)-dimethylallyladenosine(37) in tRNA + diphosphate. Catalyzes the transfer of a dimethylallyl group onto the adenine at position 37 in tRNAs that read codons beginning with uridine, leading to the formation of N6-(dimethylallyl)adenosine (i(6)A). In Trichodesmium erythraeum (strain IMS101), this protein is tRNA dimethylallyltransferase.